A 236-amino-acid polypeptide reads, in one-letter code: 2,3,4,5-tetrahydropyridine-2,6-dicarboxylate N-acetyltransferase (236 aa).

Belongs to the transferase hexapeptide repeat family. DapH subfamily.

It catalyses the reaction (S)-2,3,4,5-tetrahydrodipicolinate + acetyl-CoA + H2O = L-2-acetamido-6-oxoheptanedioate + CoA. It functions in the pathway amino-acid biosynthesis; L-lysine biosynthesis via DAP pathway; LL-2,6-diaminopimelate from (S)-tetrahydrodipicolinate (acetylase route): step 1/3. In terms of biological role, catalyzes the transfer of an acetyl group from acetyl-CoA to tetrahydrodipicolinate. The protein is 2,3,4,5-tetrahydropyridine-2,6-dicarboxylate N-acetyltransferase of Lactobacillus helveticus (strain DPC 4571).